The following is a 90-amino-acid chain: UPF0367 protein SYNPCC7002_A0153 (90 aa).

It belongs to the UPF0367 family.

The polypeptide is UPF0367 protein SYNPCC7002_A0153 (Picosynechococcus sp. (strain ATCC 27264 / PCC 7002 / PR-6) (Agmenellum quadruplicatum)).